Consider the following 265-residue polypeptide: METKAVVLTLAVLFLTGSQARHFWQQDEPQTSWSRVKDLVTVYLDALKDSSRDYVSQFEASALGKQLNLKILDNWDTLSSTFTKLQEQMRPIFQKLWEDLDKETSPLREVLNKDLEELKQKVQPYLDQFQKKWQEEVELFRQKMAPLGTELREGSRQKLQELQEKLGPLGEELRDSLRSHVDALRTQLAPYTEEMRQRLASRLEALKESNLAEYHTKASEHLSALRENAKPALEDFRQGLMPVLEGFQKSVLAALDEATKKLNSQ.

The first 20 residues, Met-1–Ala-20, serve as a signal peptide directing secretion. A run of 2 repeats spans residues Leu-69–Arg-90 and Pro-91–Asn-112. Residues Leu-69–Gln-265 are 10 X approximate tandem repeats. The stretch at Lys-113 to Gln-123 is one 3; half-length repeat. 5 repeat units span residues Pro-124–Ala-145, Pro-146–Gly-167, Pro-168–Ala-189, Pro-190–Ser-209, and Asn-210–Lys-230. Met-195 bears the Methionine sulfoxide mark. One copy of the 9; half-length repeat lies at Pro-231–Met-241. Met-241 carries the post-translational modification Methionine sulfoxide. The stretch at Pro-242–Gln-265 is repeat 10.

This sequence belongs to the apolipoprotein A1/A4/E family. As to quaternary structure, homodimer. Interacts with APOA1BP and CLU. Component of a sperm activating protein complex (SPAP), consisting of APOA1, an immunoglobulin heavy chain, an immunoglobulin light chain and albumin. Interacts with NDRG1. Interacts with SCGB3A2. Interacts with NAXE and YJEFN3. Glycosylated. Post-translationally, palmitoylated. In terms of processing, phosphorylation sites are present in the extracellular medium. Major protein of plasma HDL, also found in chylomicrons.

The protein resides in the secreted. Its function is as follows. Participates in the reverse transport of cholesterol from tissues to the liver for excretion by promoting cholesterol efflux from tissues and by acting as a cofactor for the lecithin cholesterol acyltransferase (LCAT). As part of the SPAP complex, activates spermatozoa motility. In Orycteropus afer (Aardvark), this protein is Apolipoprotein A-I (APOA1).